The sequence spans 169 residues: Transmembrane protein B169L (169 aa).

2 consecutive transmembrane segments (helical) span residues Asn-28–Cys-48 and Thr-60–Asn-80. Asn-88 carries N-linked (GlcNAc...) asparagine; by host glycosylation. The segment at Asp-107 to Asn-169 is disordered. Residues Lys-140–Pro-154 show a composition bias toward low complexity.

The protein belongs to the asfivirus B169L family.

It is found in the host membrane. The protein resides in the virion. The polypeptide is Transmembrane protein B169L (Ornithodoros (relapsing fever ticks)).